Here is a 300-residue protein sequence, read N- to C-terminus: B3 domain-containing protein At5g57720 (300 aa).

Positions 11-105 (PDFLKIFNSH…SFWVRIHRNG (95 aa)) form a DNA-binding region, TF-B3. The segment at 115–142 (KIQEISDDEDETNGDGDPHMEEEGDTDE) is disordered. Over residues 119 to 129 (ISDDEDETNGD) the composition is skewed to acidic residues.

Its subcellular location is the nucleus. The protein is B3 domain-containing protein At5g57720 of Arabidopsis thaliana (Mouse-ear cress).